We begin with the raw amino-acid sequence, 290 residues long: MKDSAILNQLKVVLPPHIMEIIYFRYNQIDTYLKPYNLPIKTDVLLLALFTLIFIIIISKLFGSSGNKTRSVGGRTSNDKKVKRGVNIAILGLSNAGKTALLLNLTNVDKKISTHTSITTNNGVYITENKKKLPIIDVPGNGKAKASLPKILSNSACIIYVIDGTTFIDNSTQEAQYLYDILTNESVYQKKIPVLVFNNKMDLDSTIDTEQVKNILERELDDLRRTRGATPIVLGQEEDKKDIYLGIEGTPFQFDHLPNDVQFSNGSASPSNGELKEIDDIKNFIQTTTL.

The chain crosses the membrane as a helical span at residues 44–64; it reads VLLLALFTLIFIIIISKLFGS. GTP-binding positions include 92 to 100, 114 to 117, Gly-140, and Ala-268; these read GLSNAGKTA and THTS.

This sequence belongs to the SRP receptor beta subunit family. In terms of assembly, heterodimer of an alpha and a beta chain.

Its subcellular location is the endoplasmic reticulum membrane. Component of the signal recognition particle (SRP) complex receptor (SR). Ensures, in conjunction with the SRP complex, the correct targeting of the nascent secretory proteins to the endoplasmic reticulum membrane system. May mediate the membrane association of SR. This chain is Signal recognition particle receptor subunit beta (srprb), found in Dictyostelium discoideum (Social amoeba).